Reading from the N-terminus, the 134-residue chain is MTDNNIMNLLNEDCILHILSFLADKDKIQLSLSCKSNLKFLHKTIYDDIYFYSKIKHLSYYHRFKYVVQDTMDDIDPQPSNIKWYILPAHYTNYAIGIRRQYNVYIKMDDTIVDENKIEKFIDKYTYDPYKYLD.

The region spanning 5 to 52 is the F-box domain; it reads NIMNLLNEDCILHILSFLADKDKIQLSLSCKSNLKFLHKTIYDDIYFY.

This is Putative F-box protein R638 from Acanthamoeba polyphaga mimivirus (APMV).